Here is a 1072-residue protein sequence, read N- to C-terminus: DNA-directed RNA polymerase subunit beta (1072 aa).

Belongs to the RNA polymerase beta chain family. In terms of assembly, in plastids the minimal PEP RNA polymerase catalytic core is composed of four subunits: alpha, beta, beta', and beta''. When a (nuclear-encoded) sigma factor is associated with the core the holoenzyme is formed, which can initiate transcription.

The protein localises to the plastid. It is found in the chloroplast. It catalyses the reaction RNA(n) + a ribonucleoside 5'-triphosphate = RNA(n+1) + diphosphate. In terms of biological role, DNA-dependent RNA polymerase catalyzes the transcription of DNA into RNA using the four ribonucleoside triphosphates as substrates. This is DNA-directed RNA polymerase subunit beta from Nasturtium officinale (Watercress).